The chain runs to 493 residues: Transcript termination protein A18 (493 aa).

Residues 100–256 form the Helicase ATP-binding domain; it reads MIELKRPLYI…NSIINIAKLS (157 aa). 113–120 is an ATP binding site; it reads LACGFGKT. The DESH box signature appears at 206–209; sequence DESH.

The protein belongs to the helicase family. Poxviruses subfamily. In terms of assembly, interacts with G2. Might be part of a transcription complex composed at least of G2, A18, and H5.

It is found in the virion. Its function is as follows. DNA helicase which seems to act as a postreplicative transcription termination factor. Involved in ATP-dependent release of nascent RNA. Forms a stable complex with single-stranded DNA, and to a lesser extent RNA. In Camelus, this protein is Transcript termination protein A18.